The chain runs to 338 residues: UDP-3-O-acylglucosamine N-acyltransferase (338 aa).

His239 serves as the catalytic Proton acceptor.

The protein belongs to the transferase hexapeptide repeat family. LpxD subfamily. In terms of assembly, homotrimer.

The enzyme catalyses a UDP-3-O-[(3R)-3-hydroxyacyl]-alpha-D-glucosamine + a (3R)-hydroxyacyl-[ACP] = a UDP-2-N,3-O-bis[(3R)-3-hydroxyacyl]-alpha-D-glucosamine + holo-[ACP] + H(+). It functions in the pathway bacterial outer membrane biogenesis; LPS lipid A biosynthesis. In terms of biological role, catalyzes the N-acylation of UDP-3-O-acylglucosamine using 3-hydroxyacyl-ACP as the acyl donor. Is involved in the biosynthesis of lipid A, a phosphorylated glycolipid that anchors the lipopolysaccharide to the outer membrane of the cell. This chain is UDP-3-O-acylglucosamine N-acyltransferase, found in Xylella fastidiosa (strain M23).